Consider the following 102-residue polypeptide: Protein C4 (102 aa).

Low complexity predominate over residues 1-27 (MRMGSLISTCLSSSKASSSARINDSST). Disordered stretches follow at residues 1–35 (MRMGSLISTCLSSSKASSSARINDSSTWSPPPGQH) and 47–86 (RQTSSPIWRRTETPSNGESFRSMDDLQEGDNNQPMTLTPR).

It belongs to the geminiviridae protein AC4/C4 family.

In terms of biological role, pathogenicity determinant. May act as a suppressor of RNA-mediated gene silencing, also known as post-transcriptional gene silencing (PTGS), a mechanism of plant viral defense that limits the accumulation of viral RNAs. The sequence is that of Protein C4 from Cynanchum acutum (Little mallow).